The sequence spans 746 residues: H(+)/Cl(-) exchange transporter 5 (746 aa).

Residues 1-54 (MDFLEEPIPGVGTYDDFNTIDWVREKSRDRDRHREITNRSKESTWALIHSVSDA) lie on the Cytoplasmic side of the membrane. Helical transmembrane passes span 55 to 92 (FSGW…ICTE) and 138 to 161 (VNYF…VKVF). The Selectivity filter part_1 signature appears at 167–171 (GSGIP). Ser-168 provides a ligand contact to chloride. Positions 170-177 (IPEIKTIL) form an intramembrane region, helical. Helical transmembrane passes span 186–205 (LGKW…VSSG) and 211–230 (EGPL…HCFN). A Selectivity filter part_2 motif is present at residues 209–213 (GKEGP). Intramembrane regions (helical) lie at residues 242 to 254 (VLSA…VSVA) and 258 to 266 (PIGGVLFSL). The next 5 helical transmembrane spans lie at 278-296 (LWRS…RSIN), 319-344 (LVPF…IAWC), 352-372 (LGKY…ILAF), 428-448 (MWQL…TFGM), and 453-472 (GLFI…LGVG). The Selectivity filter part_3 motif lies at 453–457 (GLFIP). Phe-455 lines the chloride pocket. The helical intramembrane region spans 500 to 514 (GLYAMVGAAACLGGV). Positions 515 to 517 (TRM) form an intramembrane region, note=Loop between two helices. Residues 518 to 529 (TVSLVVIMFELT) constitute an intramembrane region (helical). The segment at residues 530-534 (GGLEY) is an intramembrane region (note=Loop between two helices). The helical transmembrane segment at 535-552 (IVPLMAAAMTSKWVADAL) threads the bilayer. Topologically, residues 553 to 746 (GREGIYDAHI…NQDPDSILFN (194 aa)) are cytoplasmic. Tyr-558 contributes to the chloride binding site. CBS domains lie at 586–650 (MKPR…ARKE) and 682–742 (ILDL…DPDS). ATP-binding positions include Thr-596, 617–619 (YSG), and 724–727 (TKKD).

This sequence belongs to the chloride channel (TC 2.A.49) family. ClC-5/CLCN5 subfamily. As to quaternary structure, interacts with NEDD4 and NEDD4L. Ubiquitinated by NEDD4L in the presence of albumin; which promotes endocytosis and proteasomal degradation. Detected in duodenum, jejunum and ileum. Detected in crypt and villus regions of the epithelium of the small intestine.

The protein localises to the golgi apparatus membrane. It is found in the endosome membrane. It localises to the cell membrane. The catalysed reaction is 2 chloride(in) + H(+)(out) = 2 chloride(out) + H(+)(in). In terms of biological role, proton-coupled chloride transporter. Functions as antiport system and exchanges chloride ions against protons. Important for normal acidification of the endosome lumen. May play an important role in renal tubular function. The CLC channel family contains both chloride channels and proton-coupled anion transporters that exchange chloride or another anion for protons. The absence of conserved gating glutamate residues is typical for family members that function as channels. This Cavia porcellus (Guinea pig) protein is H(+)/Cl(-) exchange transporter 5 (CLCN5).